Consider the following 472-residue polypeptide: MSAHGTNEGALWGGRFESGPAAAMAALSKSTHFDWVLAPYDVRASQAHARVLHKAGLLGDEDLATMLDGLGRLAADVASGDFIPSESDEDVHGALERGLIDRVGPDVGGRLRAGRSRNDQVATLFRMWLRDAVRRVAEGVLDIVDALATQAAAHPSAVMPGKTHLQAAQPVLLAHHLLAHTHPLLRDVQRLRDFDVRAAVSPYGSGALAGSSLGLDPEAIAAELAFDSSAENSIDATSSRDFAAEAAFVLAMIGVDLSRMAEEVILWSTPEFGYITLADAWSTGSSIMPQKKNPDVSELTRGKSGRLIGNLTGLLATLKAQPLAYNRDLQEDKEPVFDSVAQLELLLPAITGLVATLEFHTDRMAELAPAGFTLATDIAEWLVRQGVPFRVAHEAAGACVRVAEARGAGLEDLTDEELAGVDPALTPDVREVLTVEGSIASRNARGGTAGIRVAEQLGGVRQLSESLREWCR.

This sequence belongs to the lyase 1 family. Argininosuccinate lyase subfamily.

It is found in the cytoplasm. The catalysed reaction is 2-(N(omega)-L-arginino)succinate = fumarate + L-arginine. Its pathway is amino-acid biosynthesis; L-arginine biosynthesis; L-arginine from L-ornithine and carbamoyl phosphate: step 3/3. The polypeptide is Argininosuccinate lyase (Rhodococcus opacus (strain B4)).